Here is a 923-residue protein sequence, read N- to C-terminus: Periplasmic nitrate reductase (923 aa).

Positions 1–30 (MNRRDFIKNTAIASAASVAGLSVPSSMLGA) form a signal peptide, tat-type signal. Positions 34 to 90 (WKWDKAVCRFCGTGCGIMIARKDGKIVATKGDPAAPVNRGLNCIKGYFNAKIMYGED) constitute a 4Fe-4S Mo/W bis-MGD-type domain. Cysteine 41, cysteine 44, cysteine 48, and cysteine 76 together coordinate [4Fe-4S] cluster. Mo-bis(molybdopterin guanine dinucleotide) contacts are provided by residues lysine 78, glutamine 146, asparagine 171, cysteine 175, 208–215 (WGANMAEM), methionine 416, glutamine 420, asparagine 526, 551–552 (SD), lysine 574, aspartate 601, and 813–822 (TGRVLEHWHS). Residue tryptophan 889 coordinates substrate. Residues asparagine 897 and lysine 914 each coordinate Mo-bis(molybdopterin guanine dinucleotide).

This sequence belongs to the prokaryotic molybdopterin-containing oxidoreductase family. NasA/NapA/NarB subfamily. As to quaternary structure, component of the periplasmic nitrate reductase NapAB complex composed of NapA and NapB. [4Fe-4S] cluster serves as cofactor. Mo-bis(molybdopterin guanine dinucleotide) is required as a cofactor. Predicted to be exported by the Tat system. The position of the signal peptide cleavage has not been experimentally proven.

The protein resides in the periplasm. The catalysed reaction is 2 Fe(II)-[cytochrome] + nitrate + 2 H(+) = 2 Fe(III)-[cytochrome] + nitrite + H2O. Functionally, catalytic subunit of the periplasmic nitrate reductase complex NapAB. Receives electrons from NapB and catalyzes the reduction of nitrate to nitrite. The polypeptide is Periplasmic nitrate reductase (Campylobacter jejuni subsp. jejuni serotype O:23/36 (strain 81-176)).